The sequence spans 439 residues: 3-phosphoshikimate 1-carboxyvinyltransferase (439 aa).

3-phosphoshikimate is bound by residues lysine 25, serine 26, and arginine 30. Residue lysine 25 coordinates phosphoenolpyruvate. Phosphoenolpyruvate is bound by residues glycine 96 and arginine 124. Residues serine 170, serine 171, glutamine 172, serine 202, aspartate 324, and lysine 351 each contribute to the 3-phosphoshikimate site. Glutamine 172 is a phosphoenolpyruvate binding site. The active-site Proton acceptor is aspartate 324. 3 residues coordinate phosphoenolpyruvate: arginine 355, arginine 399, and lysine 424.

This sequence belongs to the EPSP synthase family. Monomer.

The protein localises to the cytoplasm. It catalyses the reaction 3-phosphoshikimate + phosphoenolpyruvate = 5-O-(1-carboxyvinyl)-3-phosphoshikimate + phosphate. It participates in metabolic intermediate biosynthesis; chorismate biosynthesis; chorismate from D-erythrose 4-phosphate and phosphoenolpyruvate: step 6/7. Catalyzes the transfer of the enolpyruvyl moiety of phosphoenolpyruvate (PEP) to the 5-hydroxyl of shikimate-3-phosphate (S3P) to produce enolpyruvyl shikimate-3-phosphate and inorganic phosphate. The sequence is that of 3-phosphoshikimate 1-carboxyvinyltransferase from Bordetella avium (strain 197N).